The chain runs to 579 residues: Tyrosine 3-monooxygenase (579 aa).

Acidic residues predominate over residues 105-114 (VEFESVEQEQ). The segment at 105 to 132 (VEFESVEQEQSESQSQEPEGNQQPTKND) is disordered. Fe cation contacts are provided by His409, His414, and Glu454.

The protein belongs to the biopterin-dependent aromatic amino acid hydroxylase family. Fe(2+) is required as a cofactor.

Its subcellular location is the cytoplasm. It is found in the perinuclear region. The protein resides in the cell projection. It localises to the axon. It catalyses the reaction (6R)-L-erythro-5,6,7,8-tetrahydrobiopterin + L-tyrosine + O2 = (4aS,6R)-4a-hydroxy-L-erythro-5,6,7,8-tetrahydrobiopterin + L-dopa. The protein operates within catecholamine biosynthesis; dopamine biosynthesis; dopamine from L-tyrosine: step 1/2. With respect to regulation, phosphorylation leads to an increase in the catalytic activity. Its function is as follows. Plays an important role in the physiology of adrenergic neurons. This chain is Tyrosine 3-monooxygenase (ple), found in Drosophila melanogaster (Fruit fly).